A 244-amino-acid chain; its full sequence is MNDPFARMETRGPQGAANPMDSSRSLGDLGPFPREVGRGAPLAPGARNPATAGASRSQGGGHEDRTADRALGPRAGEELDRESWVREKVLFLLHPERWLGTRGDPAREEVAGAEDLPHAGGEDHGEEPNYPSVFQRQKRISGRRVAPPRDAADPPKYVLVRVEDYQVTQEVLQTSWAKGRMTTRTEEHFVTALTFRSSREGQPGERWGPAESRALQARTGASRVHAAGRRVSPSPGTWLEEIKL.

2 stretches are compositionally biased toward basic and acidic residues: residues 1-10 and 100-127; these read MNDPFARMET and GTRGDPAREEVAGAEDLPHAGGEDHGEE. 3 disordered regions span residues 1–79, 100–130, and 219–244; these read MNDP…GEEL, GTRGDPAREEVAGAEDLPHAGGEDHGEEPNY, and TGASRVHAAGRRVSPSPGTWLEEIKL.

This is an uncharacterized protein from Homo sapiens (Human).